A 126-amino-acid polypeptide reads, in one-letter code: Heterotrimeric G protein gamma subunit GPG1 (126 aa).

In terms of assembly, g proteins are composed of 3 units, alpha, beta and gamma. GPG1 interacts with the beta subunits GBP1 and GPB2.

It localises to the cytoplasm. Gamma subunit of a guanine nucleotide-binding protein (G protein). G proteins are involved as modulators or transducers in various transmembrane signaling systems. The beta and gamma chains are required for the GTPase activity, for replacement of GDP by GTP, and for G protein-effector interaction. Involved in the determination of the cAMP level according to nutritional conditions, most probably as a regulator of cAMP phosphodiesterase. Required for the control of pseudohyphal and haploid invasive growth. This Saccharomyces cerevisiae (strain ATCC 204508 / S288c) (Baker's yeast) protein is Heterotrimeric G protein gamma subunit GPG1 (GPG1).